The following is a 204-amino-acid chain: Inositol diphosphatase DSP5 (204 aa).

Residues 19-168 enclose the Tyrosine-protein phosphatase domain; sequence NFSMVEDEIY…FDVLRLKQCL (150 aa). The tract at residues 75-87 is WPD loop important for active site topology; that stretch reads FGIEGKTDPPTPM. The active-site Phosphocysteine intermediate is the Cys111.

It belongs to the protein-tyrosine phosphatase family. Atypical dual-specificity phosphatase Siw14-like subfamily. In terms of tissue distribution, highly expressed in flowers. Expressed at low levels in roots, leaves, stems and siliques.

It catalyses the reaction 5-diphospho-1D-myo-inositol 1,2,3,4,6-pentakisphosphate + H2O = 1D-myo-inositol hexakisphosphate + phosphate + H(+). It carries out the reaction 1,5-bis(diphospho)-1D-myo-inositol 2,3,4,6-tetrakisphosphate + H2O = 1-diphospho-1D-myo-inositol 2,3,4,5,6-pentakisphosphate + phosphate + 2 H(+). The catalysed reaction is 3,5-bis(diphospho)-1D-myo-inositol 1,2,4,6-tetrakisphosphate + H2O = 3-diphospho-1D-myo-inositol 1,2,4,5,6-pentakisphosphate + phosphate + 2 H(+). The enzyme catalyses 6-diphospho-1D-myo-inositol pentakisphosphate + H2O = 1D-myo-inositol hexakisphosphate + phosphate + H(+). In terms of biological role, cleaves the beta-phosphate at the 5-position of soluble inositol pyrophosphates. Has highest activity on 5-diphosphoinositol 1,2,3,4,6-pentakisphosphate (5-InsP(7)). Possesses low phosphotyrosine phosphatase activity in vitro. Dephosphorylates the phosphoinositides PI(3,5)P2. Hydrolyzes O-methylfluorescein phosphate in vitro. The chain is Inositol diphosphatase DSP5 from Arabidopsis thaliana (Mouse-ear cress).